A 222-amino-acid polypeptide reads, in one-letter code: Small ribosomal subunit protein uS7m (222 aa).

It belongs to the universal ribosomal protein uS7 family. In terms of assembly, part of the small ribosomal subunit.

It localises to the mitochondrion. Functionally, one of the primary rRNA binding proteins, it binds directly to 18S rRNA where it nucleates assembly of the head domain of the small subunit. This Prototheca wickerhamii protein is Small ribosomal subunit protein uS7m (RPS7).